The chain runs to 786 residues: Constitutive coactivator of peroxisome proliferator-activated receptor gamma (786 aa).

The segment at 1–561 is mediates transactivation of PPARG; sequence MGVRGLQGFV…GTPSLEVLWL (561 aa). Disordered stretches follow at residues 371-413 and 738-786; these read PNQE…KLPS and HWDS…WRRY. A compositionally biased stretch (polar residues) spans 750–771; sequence QGYSSYRTDSTHGHSGQSWRNQ.

The protein belongs to the constitutive coactivator of PPAR-gamma family. Interacts with ESR1 and RXRA. Interacts with PPARG; in a ligand-independent manner. As to expression, ubiquitously expressed (at protein level).

Its subcellular location is the nucleus. In terms of biological role, functions as a transactivator of PPARG and ESR1. Functions in adipogenesis through PPARG activation. The sequence is that of Constitutive coactivator of peroxisome proliferator-activated receptor gamma (Fam120b) from Mus musculus (Mouse).